The chain runs to 497 residues: MNVFFMFSKPGKLADDRNPLEECFRETDYEEFLEIAKNGLSTTSNPKRVVIVGAGMSGLSAAYVLANAGHQVTVLEASERAGGQVKTYRNEKEGWYANLGPMRLPEKHRIVREYIRKFGLQLNEFSQENENAWYFIKNIRKRVGEVNKDPGVLDYPVKPSEVGKSAGQLYEESLQKAVEELRRTNCSYMLNKYDTYSTKEYLLKEGNLSPGAVDMIGDLLNEDSGYYVSFIESLKHDDIFAYEKRFDEIVGGMDKLPTSMYQAIQEKVHLNARVIKIQQDVKEVTVTYQTSEKETLSVTADYVIVCTTSRAARRIKFEPPLPPKKAHALRSVHYRSGTKIFLTCTKKFWEDDGIHGGKSTTDLPSRFIYYPNHNFPNGVGVIIAYGIGDDANYFEALDFEDCGDIVINDLSLIHQLPKEEIQAICRPSMIQRWSLDKYAMGGITTFTPYQFQHFSEALTAPVDRIYFAGEYTAQAHGWIASTIKSGPEGLDVNRASE.

Positions 1-13 (MNVFFMFSKPGKL) are cleaved as a signal peptide. C23 and C186 form a disulfide bridge. Residues 56–57 (MS), 76–77 (EA), 76–80 (EASER), Q84, and 100–103 (GPMR) contribute to the FAD site. R103 lines the substrate pocket. The N-linked (GlcNAc...) asparagine glycan is linked to N185. H236 lines the substrate pocket. V274 contacts FAD. An intrachain disulfide couples C344 to C425. Position 385 (Y385) interacts with substrate. FAD is bound by residues E470, 477–482 (GWIAST), and 478–482 (WIAST). 477–478 (GW) lines the substrate pocket.

This sequence belongs to the flavin monoamine oxidase family. FIG1 subfamily. Homodimer; non-covalently linked. The cofactor is FAD. In terms of tissue distribution, expressed by the venom gland.

The protein localises to the secreted. It carries out the reaction an L-alpha-amino acid + O2 + H2O = a 2-oxocarboxylate + H2O2 + NH4(+). It catalyses the reaction L-leucine + O2 + H2O = 4-methyl-2-oxopentanoate + H2O2 + NH4(+). The enzyme catalyses L-phenylalanine + O2 + H2O = 3-phenylpyruvate + H2O2 + NH4(+). The catalysed reaction is L-tryptophan + O2 + H2O = indole-3-pyruvate + H2O2 + NH4(+). It carries out the reaction L-methionine + O2 + H2O = 4-methylsulfanyl-2-oxobutanoate + H2O2 + NH4(+). It catalyses the reaction L-isoleucine + O2 + H2O = (S)-3-methyl-2-oxopentanoate + H2O2 + NH4(+). The enzyme catalyses L-tyrosine + O2 + H2O = 3-(4-hydroxyphenyl)pyruvate + H2O2 + NH4(+). The catalysed reaction is L-cysteine + O2 + H2O = 2-oxo-3-sulfanylpropanoate + H2O2 + NH4(+). Functionally, catalyzes an oxidative deamination of predominantly hydrophobic and aromatic L-amino acids, thus producing hydrogen peroxide that may contribute to the diverse toxic effects of this enzyme. Shows high specificity for L-Met, L-Leu, L-Phe, L-Tyr, L-Ile, L-Trp, a moderate activity on L-Cys and low activity on L-Val, L-Lys, L-Arg, L-His, L-Gln, L-Thr and L-Ser. Exhibits diverse biological activities, such as hemorrhage, hemolysis, edema, apoptosis of vascular endothelial cells or tumor cell lines, and antibacterial, as well as regulation of platelet aggregation. Effects of snake L-amino oxidases on platelets are controversial, since they either induce aggregation or inhibit agonist-induced aggregation. These different effects are probably due to different experimental conditions. In vitro, shows parasiticidal activities against both trypanosomes and leishmania, as a result of enzyme-catalyzed hydrogen peroxide production. The polypeptide is L-amino-acid oxidase BjussuLAAO-I (Bothrops jararacussu (Jararacussu)).